A 517-amino-acid chain; its full sequence is Cytochrome P450 monooxygenase calE (517 aa).

An N-linked (GlcNAc...) asparagine glycan is attached at asparagine 8. The chain crosses the membrane as a helical span at residues 14-34 (SLMHHYILIAILVASIIAMVV). Cysteine 458 contacts heme.

It belongs to the cytochrome P450 family. Requires heme as cofactor.

It localises to the membrane. The protein operates within secondary metabolite biosynthesis. In terms of biological role, cytochrome P450 monooxygenase; part of the gene cluster that mediates the biosynthesis of calbistrin A and related compounds. Calbistrin A is a secondary metabolite with an interesting structure that was recently found to have bioactivity against leukemia cells. It consists of two polyketides linked by an ester bond: a bicyclic decalin containing polyketide and a linear 12 carbon dioic acid structure. The polyketide synthase calA is probably responsible for forming the decalin moiety. Because calA lacks a designated enoylreductase (ER) domain, the required activity is provided by the trans-enoyl reductase calK. Following release from the PKS, calF then probably catalyzes the oxidation and the subsequent Diels Alder cycloisomerization that lead to the formation of the decalin moiety. The decalin polyketide backbone includes two C-methyl groups, at C7 and C11 in backbone, of which the C7 position is probably methylated by the methyltransferase domain of calA. A candidate for adding the methyl group at C11, if not done by CalA, is the cluster methyltransferase calH. Several additional tailoring enzymes within the cluster could be involved in the modification of the decalin polyketide product. Those include the 3 cytochrome P450 monooxygenases CalE, CalG and CalL, of which one might be responsible for the introduction of the extra hydroxyl group attached to the backbone of the decalin moiety, at position C9 in the backbone, that allows for attachment of the linear moiety. One tailoring enzyme activity that is expected to be involved in biosynthesis of calbistrin is an acyltransferase for connecting the two polyketide synthase products, and which could be performed by the cluster acyltransferase calJ. The enzyme responsible for the biosynthesis of the linear moiety, probably a second PKS, has not been identified yet. This chain is Cytochrome P450 monooxygenase calE, found in Penicillium decumbens.